A 118-amino-acid chain; its full sequence is Non-specific lipid-transfer protein A (118 aa).

The N-terminal stretch at 1–25 (MAGVMKLACLVLACMIVAGPITANR) is a signal peptide. 4 disulfides stabilise this stretch: Cys-29-Cys-76, Cys-39-Cys-53, Cys-54-Cys-100, and Cys-74-Cys-114.

This sequence belongs to the plant LTP family.

Its function is as follows. Plant non-specific lipid-transfer proteins transfer phospholipids as well as galactolipids across membranes. May play a role in wax or cutin deposition in the cell walls of expanding epidermal cells and certain secretory tissues. This is Non-specific lipid-transfer protein A (WAX9A) from Brassica oleracea var. italica (Broccoli).